Consider the following 198-residue polypeptide: Large ribosomal subunit protein bL25 (198 aa).

Belongs to the bacterial ribosomal protein bL25 family. CTC subfamily. As to quaternary structure, part of the 50S ribosomal subunit; part of the 5S rRNA/L5/L18/L25 subcomplex. Contacts the 5S rRNA. Binds to the 5S rRNA independently of L5 and L18.

Its function is as follows. This is one of the proteins that binds to the 5S RNA in the ribosome where it forms part of the central protuberance. The protein is Large ribosomal subunit protein bL25 of Chlorobium phaeobacteroides (strain DSM 266 / SMG 266 / 2430).